Reading from the N-terminus, the 273-residue chain is 1,4-dihydroxy-2-naphthoyl-CoA synthase (273 aa).

Substrate is bound by residues R34, 73–77, Y85, 117–121, T143, S149, Y246, and K261; these read SGGDQ and YAVGG. 142-144 serves as a coordination point for hydrogencarbonate; that stretch reads QTG. The span at 254–265 shows a compositional bias: basic and acidic residues; it reads GRDAFKEKRDPD. Positions 254-273 are disordered; it reads GRDAFKEKRDPDFDQFPKFP.

It belongs to the enoyl-CoA hydratase/isomerase family. MenB subfamily. Hydrogencarbonate serves as cofactor.

It carries out the reaction 2-succinylbenzoyl-CoA + H(+) = 1,4-dihydroxy-2-naphthoyl-CoA + H2O. It participates in quinol/quinone metabolism; 1,4-dihydroxy-2-naphthoate biosynthesis; 1,4-dihydroxy-2-naphthoate from chorismate: step 6/7. Its pathway is quinol/quinone metabolism; menaquinone biosynthesis. In terms of biological role, converts o-succinylbenzoyl-CoA (OSB-CoA) to 1,4-dihydroxy-2-naphthoyl-CoA (DHNA-CoA). The sequence is that of 1,4-dihydroxy-2-naphthoyl-CoA synthase from Staphylococcus aureus (strain MRSA252).